The chain runs to 191 residues: Prostaglandin-H2 D-isomerase (191 aa).

Positions 1 to 24 are cleaved as a signal peptide; it reads MAALHTLWMGLVLLGVLGVLQTRA. Residue Gln25 is modified to Pyrrolidone carboxylic acid. Asn51 carries N-linked (GlcNAc...) asparagine glycosylation. Catalysis depends on Cys65, which acts as the Nucleophile. Residue Asn78 is glycosylated (N-linked (GlcNAc...) asparagine). Cysteines 89 and 186 form a disulfide.

It belongs to the calycin superfamily. Lipocalin family. In terms of assembly, monomer. Post-translationally, N- and O-glycosylated. Both N-glycosylation recognition sites are almost quantitatively occupied by N-glycans of the biantennary complex type, with a considerable proportion of structures bearing a bisecting GlcNAc. N-glycan at Asn-78: dHex1Hex5HexNAc4. Agalacto structure as well as sialylated and nonsialylated oligosaccharides bearing alpha2-3- and/or alpha2-6-linked NeuNAc are present.

The protein resides in the rough endoplasmic reticulum. The protein localises to the nucleus membrane. It localises to the golgi apparatus. It is found in the cytoplasm. Its subcellular location is the perinuclear region. The protein resides in the secreted. It carries out the reaction prostaglandin H2 = prostaglandin D2. Functionally, catalyzes the conversion of PGH2 to PGD2, a prostaglandin involved in smooth muscle contraction/relaxation and a potent inhibitor of platelet aggregation. Involved in a variety of CNS functions, such as sedation, NREM sleep and PGE2-induced allodynia, and may have an anti-apoptotic role in oligodendrocytes. Binds small non-substrate lipophilic molecules, including biliverdin, bilirubin, retinal, retinoic acid and thyroid hormone, and may act as a scavenger for harmful hydrophobic molecules and as a secretory retinoid and thyroid hormone transporter. Possibly involved in development and maintenance of the blood-brain, blood-retina, blood-aqueous humor and blood-testis barrier. It is likely to play important roles in both maturation and maintenance of the central nervous system and male reproductive system. Involved in PLA2G3-dependent maturation of mast cells. PLA2G3 is secreted by immature mast cells and acts on nearby fibroblasts upstream to PTDGS to synthesize PGD2, which in turn promotes mast cell maturation and degranulation via PTGDR. The protein is Prostaglandin-H2 D-isomerase (PTGDS) of Felis catus (Cat).